The following is a 246-amino-acid chain: MHLLSLLFPVIALIPTVLSHGYVSGIVANGVYTAGWQVSYWYDIINKVPYPQTPGWYEEALDLGFVAPDQYSTSDIICHKNAVNANVSATVAAGGTVQFQWTTWPHNIGPVLTYVANCGGSCSTVNKNNLKWVKIDQSGINFSTQVWATGALMANNNTWTSTVPKTLAAGHYIFRHEIIALHGATTANGAQNYPFCVNIDVTGSGTASPAGVAATSFYKATDPGILFNPYVTLSNYTIPGPALWTG.

Residues 1-19 form the signal peptide; sequence MHLLSLLFPVIALIPTVLS. Position 20 (His-20) interacts with Cu(2+). Residues Cys-78 and Cys-196 are joined by a disulfide bond. N-linked (GlcNAc...) asparagine glycans are attached at residues Asn-86, Asn-141, and Asn-156. Positions 182 and 191 each coordinate O2. Tyr-193 provides a ligand contact to Cu(2+). N-linked (GlcNAc...) asparagine glycosylation occurs at Asn-235.

Belongs to the polysaccharide monooxygenase AA9 family. Cu(2+) is required as a cofactor.

The protein localises to the secreted. It catalyses the reaction [(1-&gt;4)-beta-D-glucosyl]n+m + reduced acceptor + O2 = 4-dehydro-beta-D-glucosyl-[(1-&gt;4)-beta-D-glucosyl]n-1 + [(1-&gt;4)-beta-D-glucosyl]m + acceptor + H2O.. Its function is as follows. Lytic polysaccharide monooxygenase (LPMO) that depolymerizes crystalline and amorphous polysaccharides via the oxidation of scissile alpha- or beta-(1-4)-glycosidic bonds, yielding C1 and C4 oxidation products. Catalysis by LPMOs requires the reduction of the active-site copper from Cu(II) to Cu(I) by a reducing agent and H(2)O(2) or O(2) as a cosubstrate. The chain is AA9 family lytic polysaccharide monooxygenase D from Botryotinia fuckeliana (strain B05.10) (Noble rot fungus).